The following is a 37-amino-acid chain: Large ribosomal subunit protein bL36 (37 aa).

It belongs to the bacterial ribosomal protein bL36 family.

The protein is Large ribosomal subunit protein bL36 of Heliobacterium modesticaldum (strain ATCC 51547 / Ice1).